The following is a 228-amino-acid chain: MINMTETKQLKLILIGDVNVGKTSILHRLIFSKFTEEYKSTIGADFLSKTFYQNDIITHIQLWDTAGQEKYWCLTSAFWRTSDAVILVFDISNESSFRNLNFWYKQFKSKSINPDGTEKQLPILLLANKSDSLTRAVDQSEINQWCTDHKVNLYYEVSAKSSINIKESILKLVEVIIEQDKDSDNEQFNDSPDEETSSITLLGTSKKHDNTNPNKPSTSSPSSCFNCK.

GTP is bound at residue 16-23 (GDVNVGKT). Residues 38 to 46 (YKSTIGADF) carry the Effector region motif. GTP-binding positions include 64–68 (DTAGQ) and 128–131 (NKSD). A disordered region spans residues 183 to 228 (SDNEQFNDSPDEETSSITLLGTSKKHDNTNPNKPSTSSPSSCFNCK). Over residues 185 to 196 (NEQFNDSPDEET) the composition is skewed to acidic residues. Over residues 211–228 (TNPNKPSTSSPSSCFNCK) the composition is skewed to low complexity. A lipid anchor (S-geranylgeranyl cysteine) is attached at cysteine 224.

This sequence belongs to the small GTPase superfamily. Rab family.

The chain is Ras-related protein Rab-32D (rab32D) from Dictyostelium discoideum (Social amoeba).